The sequence spans 335 residues: Dihydroorotate dehydrogenase (quinone) (335 aa).

FMN contacts are provided by residues 61-65 (AGLDK) and threonine 85. Substrate is bound at residue lysine 65. A substrate-binding site is contributed by 110–114 (NRMGF). FMN-binding residues include asparagine 138 and asparagine 171. Substrate is bound at residue asparagine 171. The active-site Nucleophile is the serine 174. Asparagine 176 is a substrate binding site. 2 residues coordinate FMN: lysine 216 and threonine 244. 245–246 (NT) serves as a coordination point for substrate. FMN is bound by residues glycine 267, glycine 296, and 317–318 (YS).

The protein belongs to the dihydroorotate dehydrogenase family. Type 2 subfamily. Monomer. It depends on FMN as a cofactor.

It localises to the cell membrane. It catalyses the reaction (S)-dihydroorotate + a quinone = orotate + a quinol. The protein operates within pyrimidine metabolism; UMP biosynthesis via de novo pathway; orotate from (S)-dihydroorotate (quinone route): step 1/1. Its function is as follows. Catalyzes the conversion of dihydroorotate to orotate with quinone as electron acceptor. This Pseudoalteromonas atlantica (strain T6c / ATCC BAA-1087) protein is Dihydroorotate dehydrogenase (quinone).